We begin with the raw amino-acid sequence, 238 residues long: Transcription factor PCL1 (238 aa).

Positions 71 to 90 are enriched in low complexity; sequence RLRRASSSSSSSFPAFASKG. Positions 71 to 119 are disordered; it reads RLRRASSSSSSSFPAFASKGAGTGADEAESGGGADGGNGNTNNSSSKRA. A compositionally biased stretch (gly residues) spans 100–109; sequence SGGGADGGNG. Residues 115–174 constitute a DNA-binding region (myb-like GARP); that stretch reads SSKRARLVWTPQLHKRFVEVVAHLGMKNAVPKTIMQLMNVEGLTRENVASHLQKYRLYVK.

It is found in the nucleus. Transcription factor that is essential for the generation of the circadian clock oscillation. Binds to specific sites on CCA1 promoter leading to CCA1 activation. This is Transcription factor PCL1 (PCL1) from Oryza sativa subsp. japonica (Rice).